The sequence spans 145 residues: 3-dehydroquinate dehydratase 2 (145 aa).

Tyrosine 22 acts as the Proton acceptor in catalysis. Residues asparagine 73, histidine 79, and aspartate 86 each coordinate substrate. The Proton donor role is filled by histidine 101. Residues 102–103 and arginine 112 contribute to the substrate site; that span reads IS.

Belongs to the type-II 3-dehydroquinase family. As to quaternary structure, homododecamer.

The catalysed reaction is 3-dehydroquinate = 3-dehydroshikimate + H2O. It functions in the pathway metabolic intermediate biosynthesis; chorismate biosynthesis; chorismate from D-erythrose 4-phosphate and phosphoenolpyruvate: step 3/7. Its function is as follows. Catalyzes a trans-dehydration via an enolate intermediate. The sequence is that of 3-dehydroquinate dehydratase 2 (aroQ2) from Corynebacterium efficiens (strain DSM 44549 / YS-314 / AJ 12310 / JCM 11189 / NBRC 100395).